We begin with the raw amino-acid sequence, 736 residues long: Centrosomal protein kizuna (736 aa).

A coiled-coil region spans residues 10–35; that stretch reads HRAMKLQRNLRHCEGKRLELERELFQ. The span at 192–208 shows a compositional bias: polar residues; the sequence is NTSFQLSQKMPVTSVAS. Disordered regions lie at residues 192–238, 279–305, 323–348, and 642–690; these read NTSF…SAQL, SFTH…DKHS, EDKQ…SYPP, and TVEE…NMST. A compositionally biased stretch (basic and acidic residues) spans 210 to 219; that stretch reads EDGRTHRAQI. Over residues 328–339 the composition is skewed to polar residues; that stretch reads LDSSSDLTVSIS. Residues 658–668 show a composition bias toward low complexity; it reads SETSFSSSEKS. Polar residues predominate over residues 678 to 690; that stretch reads IQPNYMKSNNMST.

This sequence belongs to the kizuna family.

The protein localises to the cytoplasm. Its subcellular location is the cytoskeleton. It is found in the microtubule organizing center. The protein resides in the centrosome. It localises to the cilium basal body. Functionally, centrosomal protein required for establishing a robust mitotic centrosome architecture that can endure the forces that converge on the centrosomes during spindle formation. Required for stabilizing the expanded pericentriolar material around the centriole. The protein is Centrosomal protein kizuna (kiz) of Xenopus laevis (African clawed frog).